A 358-amino-acid polypeptide reads, in one-letter code: Protein RecA (358 aa).

76 to 83 (GPESSGKT) serves as a coordination point for ATP.

Belongs to the RecA family.

The protein localises to the cytoplasm. In terms of biological role, can catalyze the hydrolysis of ATP in the presence of single-stranded DNA, the ATP-dependent uptake of single-stranded DNA by duplex DNA, and the ATP-dependent hybridization of homologous single-stranded DNAs. It interacts with LexA causing its activation and leading to its autocatalytic cleavage. The polypeptide is Protein RecA (Rhodospirillum centenum (strain ATCC 51521 / SW)).